Here is a 236-residue protein sequence, read N- to C-terminus: Chorionic somatomammotropin hormone 1 (236 aa).

A signal peptide spans 1–36 (MAPASSHRGHQWICDLVRGSCLLLLLVVSNLLLCQG). N-linked (GlcNAc...) asparagine glycosylation occurs at Asn89. 2 disulfide bridges follow: Cys98–Cys214 and Cys231–Cys236.

This sequence belongs to the somatotropin/prolactin family.

The protein resides in the secreted. This chain is Chorionic somatomammotropin hormone 1 (CSH1), found in Bos taurus (Bovine).